Here is a 283-residue protein sequence, read N- to C-terminus: Thymidylate synthase (283 aa).

Arg22 is a binding site for dUMP. Cys160 serves as the catalytic Nucleophile. DUMP contacts are provided by residues 180–183 (RSCD), Asn191, and 221–223 (HIY). Asp183 serves as a coordination point for (6R)-5,10-methylene-5,6,7,8-tetrahydrofolate. Ser282 contacts (6R)-5,10-methylene-5,6,7,8-tetrahydrofolate.

This sequence belongs to the thymidylate synthase family. Bacterial-type ThyA subfamily. In terms of assembly, homodimer.

It is found in the cytoplasm. The catalysed reaction is dUMP + (6R)-5,10-methylene-5,6,7,8-tetrahydrofolate = 7,8-dihydrofolate + dTMP. The protein operates within pyrimidine metabolism; dTTP biosynthesis. In terms of biological role, catalyzes the reductive methylation of 2'-deoxyuridine-5'-monophosphate (dUMP) to 2'-deoxythymidine-5'-monophosphate (dTMP) while utilizing 5,10-methylenetetrahydrofolate (mTHF) as the methyl donor and reductant in the reaction, yielding dihydrofolate (DHF) as a by-product. This enzymatic reaction provides an intracellular de novo source of dTMP, an essential precursor for DNA biosynthesis. This Shewanella pealeana (strain ATCC 700345 / ANG-SQ1) protein is Thymidylate synthase.